Reading from the N-terminus, the 236-residue chain is Truncated formate dehydrogenase 2 (236 aa).

Residues 36–37 (RI), Asp57, 104–108 (PLHKD), Thr130, Asp156, and 185–188 (HISG) each bind NAD(+).

The protein belongs to the D-isomer specific 2-hydroxyacid dehydrogenase family. FDH subfamily.

This Saccharomyces cerevisiae (strain ATCC 204508 / S288c) (Baker's yeast) protein is Truncated formate dehydrogenase 2.